We begin with the raw amino-acid sequence, 376 residues long: Cyclin-dependent kinase 9-B (376 aa).

The Protein kinase domain occupies 19–319 (YERLAKIGQG…SDEALNHDFF (301 aa)). ATP is bound by residues 25–33 (IGQGTFGEV) and lysine 48. Aspartate 153 (proton acceptor) is an active-site residue. Positions 345 to 376 (PPRRRGGHMPQQPANQARNPAATNQSEFDRVF) are disordered. A compositionally biased stretch (low complexity) spans 354–369 (PQQPANQARNPAATNQ).

The protein belongs to the protein kinase superfamily. CMGC Ser/Thr protein kinase family. CDC2/CDKX subfamily. Associates with cyclin-T to form P-TEFb.

It is found in the nucleus. It catalyses the reaction L-seryl-[protein] + ATP = O-phospho-L-seryl-[protein] + ADP + H(+). The catalysed reaction is L-threonyl-[protein] + ATP = O-phospho-L-threonyl-[protein] + ADP + H(+). The enzyme catalyses [DNA-directed RNA polymerase] + ATP = phospho-[DNA-directed RNA polymerase] + ADP + H(+). In terms of biological role, member of the cyclin-dependent kinase pair (CDK9/cyclin-T) complex, also called positive transcription elongation factor B (P-TEFb), which is proposed to facilitate the transition from abortive to production elongation by phosphorylating the CTD (C-terminal domain) of the large subunit of RNA polymerase II (RNAP II) and SUPT5H. In Xenopus laevis (African clawed frog), this protein is Cyclin-dependent kinase 9-B (cdk9-b).